The primary structure comprises 490 residues: Glutamyl-tRNA(Gln) amidotransferase subunit A (490 aa).

Active-site charge relay system residues include lysine 76 and serine 151. Serine 175 acts as the Acyl-ester intermediate in catalysis.

Belongs to the amidase family. GatA subfamily. In terms of assembly, heterotrimer of A, B and C subunits.

It carries out the reaction L-glutamyl-tRNA(Gln) + L-glutamine + ATP + H2O = L-glutaminyl-tRNA(Gln) + L-glutamate + ADP + phosphate + H(+). In terms of biological role, allows the formation of correctly charged Gln-tRNA(Gln) through the transamidation of misacylated Glu-tRNA(Gln) in organisms which lack glutaminyl-tRNA synthetase. The reaction takes place in the presence of glutamine and ATP through an activated gamma-phospho-Glu-tRNA(Gln). In Methylobacillus flagellatus (strain ATCC 51484 / DSM 6875 / VKM B-1610 / KT), this protein is Glutamyl-tRNA(Gln) amidotransferase subunit A.